The following is a 154-amino-acid chain: Ribonuclease HI (154 aa).

The region spanning 1-142 (MTKHVEIFTD…CDELARTAAE (142 aa)) is the RNase H type-1 domain. Mg(2+)-binding residues include D10, E48, D70, and D134.

Belongs to the RNase H family. Monomer. It depends on Mg(2+) as a cofactor.

The protein resides in the cytoplasm. The catalysed reaction is Endonucleolytic cleavage to 5'-phosphomonoester.. In terms of biological role, endonuclease that specifically degrades the RNA of RNA-DNA hybrids. This chain is Ribonuclease HI, found in Vibrio parahaemolyticus serotype O3:K6 (strain RIMD 2210633).